The sequence spans 66 residues: ATP synthase F(0) complex subunit 8 (66 aa).

Residues 8-24 (IWLLAVVIVLTTLMIFL) form a helical membrane-spanning segment. An N6-acetyllysine; alternate modification is found at Lys54. Lys54 is subject to N6-succinyllysine; alternate. Lys57 carries the N6-acetyllysine modification.

Belongs to the ATPase protein 8 family. As to quaternary structure, component of the ATP synthase complex composed at least of ATP5F1A/subunit alpha, ATP5F1B/subunit beta, ATP5MC1/subunit c (homooctomer), MT-ATP6/subunit a, MT-ATP8/subunit 8, ATP5ME/subunit e, ATP5MF/subunit f, ATP5MG/subunit g, ATP5MK/subunit k, ATP5MJ/subunit j, ATP5F1C/subunit gamma, ATP5F1D/subunit delta, ATP5F1E/subunit epsilon, ATP5PF/subunit F6, ATP5PB/subunit b, ATP5PD/subunit d, ATP5PO/subunit OSCP. ATP synthase complex consists of a soluble F(1) head domain (subunits alpha(3) and beta(3)) - the catalytic core - and a membrane F(0) domain - the membrane proton channel (subunits c, a, 8, e, f, g, k and j). These two domains are linked by a central stalk (subunits gamma, delta, and epsilon) rotating inside the F1 region and a stationary peripheral stalk (subunits F6, b, d, and OSCP). Interacts with PRICKLE3.

The protein localises to the mitochondrion membrane. Functionally, subunit 8, of the mitochondrial membrane ATP synthase complex (F(1)F(0) ATP synthase or Complex V) that produces ATP from ADP in the presence of a proton gradient across the membrane which is generated by electron transport complexes of the respiratory chain. ATP synthase complex consist of a soluble F(1) head domain - the catalytic core - and a membrane F(1) domain - the membrane proton channel. These two domains are linked by a central stalk rotating inside the F(1) region and a stationary peripheral stalk. During catalysis, ATP synthesis in the catalytic domain of F(1) is coupled via a rotary mechanism of the central stalk subunits to proton translocation. In vivo, can only synthesize ATP although its ATP hydrolase activity can be activated artificially in vitro. Part of the complex F(0) domain. The protein is ATP synthase F(0) complex subunit 8 of Mammuthus primigenius (Siberian woolly mammoth).